Reading from the N-terminus, the 333-residue chain is Mitochondrial thiamine pyrophosphate carrier 1 (333 aa).

3 Solcar repeats span residues 12–115 (GSRL…ITQF), 129–215 (PPSV…LRPR), and 222–318 (PYSS…ALKL). The next 6 helical transmembrane spans lie at 17–35 (VTAA…IAPL), 96–112 (LLYV…YRSI), 135–155 (FIAG…LDLL), 190–209 (GLGP…FCVY), 221–238 (LPYS…SVMA), and 293–310 (GLTV…VTMW).

The protein belongs to the mitochondrial carrier (TC 2.A.29) family.

It is found in the mitochondrion inner membrane. Functionally, mitochondrial transporter that mediates uptake of thiamine pyrophosphate (ThPP) into mitochondria. The polypeptide is Mitochondrial thiamine pyrophosphate carrier 1 (tpc-1) (Neurospora crassa (strain ATCC 24698 / 74-OR23-1A / CBS 708.71 / DSM 1257 / FGSC 987)).